Reading from the N-terminus, the 309-residue chain is D-alanine--D-alanine ligase (309 aa).

An ATP-grasp domain is found at 110–305 (KLCWTGAGLP…FQELVWHILE (196 aa)). ATP is bound at residue 136 to 191 (RQALGFPVIVKPAEEGSSIGMSRAATAEELAQAWERASGYGCAVFAERWIDGVEYT). Mg(2+)-binding residues include Asp-259, Glu-272, and Asn-274.

This sequence belongs to the D-alanine--D-alanine ligase family. Mg(2+) serves as cofactor. It depends on Mn(2+) as a cofactor.

The protein localises to the cytoplasm. It carries out the reaction 2 D-alanine + ATP = D-alanyl-D-alanine + ADP + phosphate + H(+). Its pathway is cell wall biogenesis; peptidoglycan biosynthesis. In terms of biological role, cell wall formation. The chain is D-alanine--D-alanine ligase from Methylococcus capsulatus (strain ATCC 33009 / NCIMB 11132 / Bath).